The sequence spans 122 residues: Large ribosomal subunit protein uL14c (122 aa).

Belongs to the universal ribosomal protein uL14 family. As to quaternary structure, part of the 50S ribosomal subunit.

The protein localises to the plastid. It localises to the chloroplast. Functionally, binds to 23S rRNA. In Drimys granadensis, this protein is Large ribosomal subunit protein uL14c.